The sequence spans 128 residues: Ribonuclease pancreatic (128 aa).

Basic and acidic residues predominate over residues K1 to M13. Positions K1–C26 are disordered. Substrate-binding residues include K7 and R10. The Proton acceptor role is filled by H12. Over residues D14–C26 the composition is skewed to polar residues. 4 disulfide bridges follow: C26/C84, C40/C95, C58/C110, and C65/C72. N-linked (GlcNAc...) asparagine glycosylation occurs at N34. K41 to T45 lines the substrate pocket. A glycan (N-linked (GlcNAc...) asparagine) is linked at N62. Positions 66 and 85 each coordinate substrate. The active-site Proton donor is H119.

The protein belongs to the pancreatic ribonuclease family. Monomer. Interacts with and forms tight 1:1 complexes with RNH1. Dimerization of two such complexes may occur. Interaction with RNH1 inhibits this protein. Pancreas.

It localises to the secreted. The enzyme catalyses an [RNA] containing cytidine + H2O = an [RNA]-3'-cytidine-3'-phosphate + a 5'-hydroxy-ribonucleotide-3'-[RNA].. It catalyses the reaction an [RNA] containing uridine + H2O = an [RNA]-3'-uridine-3'-phosphate + a 5'-hydroxy-ribonucleotide-3'-[RNA].. Functionally, endonuclease that catalyzes the cleavage of RNA on the 3' side of pyrimidine nucleotides. Acts on single-stranded and double-stranded RNA. This chain is Ribonuclease pancreatic (RNASE1), found in Equus caballus (Horse).